The sequence spans 437 residues: GTPase Era, mitochondrial (437 aa).

A mitochondrion-targeting transit peptide spans 1-20 (MAAPRRYCAGLVRALLGARQ). In terms of domain architecture, Era-type G spans 112–330 (RVLRVVLLGA…QYLLTQAQPG (219 aa)). The tract at residues 120 to 127 (GAPNAGKS) is G1. Residue 120 to 127 (GAPNAGKS) participates in GTP binding. A G2 region spans residues 146–150 (HTTRC). The interval 167-170 (DTPG) is G3. 167–171 (DTPGI) serves as a coordination point for GTP. S173 carries the phosphoserine modification. Residue 236-239 (NKVD) participates in GTP binding. Residues 236–239 (NKVD) form a G4 region. A disordered region spans residues 270-292 (LRSRSSTHCPGPETEGPNAHSVR). Positions 308 to 310 (LSA) are G5. Positions 360 to 437 (LPEEVPYGVQ…LIRLSVKLLK (78 aa)) constitute a KH type-2 domain.

Belongs to the TRAFAC class TrmE-Era-EngA-EngB-Septin-like GTPase superfamily. Era GTPase family.

It localises to the mitochondrion matrix. It is found in the mitochondrion inner membrane. Its function is as follows. Probable GTPase that plays a role in the mitochondrial ribosomal small subunit assembly. Specifically binds the 12S mitochondrial rRNA (12S mt-rRNA) to a 33 nucleotide section delineating the 3' terminal stem-loop region. May act as a chaperone that protects the 12S mt-rRNA on the 28S mitoribosomal subunit during ribosomal small subunit assembly. This is GTPase Era, mitochondrial (Eral1) from Mus musculus (Mouse).